Consider the following 333-residue polypeptide: Tetraacyldisaccharide 4'-kinase (333 aa).

55–62 (TAGGNGKT) is an ATP binding site.

This sequence belongs to the LpxK family.

It carries out the reaction a lipid A disaccharide + ATP = a lipid IVA + ADP + H(+). The protein operates within glycolipid biosynthesis; lipid IV(A) biosynthesis; lipid IV(A) from (3R)-3-hydroxytetradecanoyl-[acyl-carrier-protein] and UDP-N-acetyl-alpha-D-glucosamine: step 6/6. Its function is as follows. Transfers the gamma-phosphate of ATP to the 4'-position of a tetraacyldisaccharide 1-phosphate intermediate (termed DS-1-P) to form tetraacyldisaccharide 1,4'-bis-phosphate (lipid IVA). This chain is Tetraacyldisaccharide 4'-kinase, found in Pectobacterium atrosepticum (strain SCRI 1043 / ATCC BAA-672) (Erwinia carotovora subsp. atroseptica).